Here is a 630-residue protein sequence, read N- to C-terminus: tRNA uridine 5-carboxymethylaminomethyl modification enzyme MnmG (630 aa).

13–18 (GGGHAG) contacts FAD. 273–287 (GPRYCPSIEDKIHRF) is a binding site for NAD(+).

The protein belongs to the MnmG family. In terms of assembly, homodimer. Heterotetramer of two MnmE and two MnmG subunits. The cofactor is FAD.

It is found in the cytoplasm. Its function is as follows. NAD-binding protein involved in the addition of a carboxymethylaminomethyl (cmnm) group at the wobble position (U34) of certain tRNAs, forming tRNA-cmnm(5)s(2)U34. This Pseudomonas aeruginosa (strain LESB58) protein is tRNA uridine 5-carboxymethylaminomethyl modification enzyme MnmG.